A 217-amino-acid polypeptide reads, in one-letter code: Transmembrane emp24 domain-containing protein p24delta6 (217 aa).

A signal peptide spans 1-26 (MAISPVLFIGLIYLAGGGSLFPGVEA). The Lumenal portion of the chain corresponds to 27 to 186 (IWLTVPESGE…INEKTNTRVN (160 aa)). The 117-residue stretch at 36–152 (ERCVYEEIQA…IEGVELEIRR (117 aa)) folds into the GOLD domain. Residues asparagine 84 and asparagine 116 are each glycosylated (N-linked (GlcNAc...) asparagine). Positions 138-160 (AKKEKIEGVELEIRRSTEYASAI) form a coiled coil. Arginine 170 and arginine 175 each carry omega-N-methylated arginine. The chain crosses the membrane as a helical span at residues 187–207 (QLGLMSLGVAIVVSISQVLYL). Residues 208–217 (KRYFLKKKLI) are Cytoplasmic-facing. Residues 210-211 (YF) carry the COPII vesicle coat-binding motif. Positions 210 to 217 (YFLKKKLI) match the COPI vesicle coat-binding motif.

Belongs to the EMP24/GP25L family. In terms of assembly, probably oligomerizes with other members of the EMP24/GP25L family. Associates with the COPI vesicle coat (coatomer). Associates with the COPII vesicle coat (coatomer).

The protein localises to the endoplasmic reticulum membrane. Involved in vesicular protein trafficking. Mainly functions in the early secretory pathway. Thought to act as cargo receptor at the lumenal side for incorporation of secretory cargo molecules into transport vesicles and to be involved in vesicle coat formation at the cytoplasmic side. The protein is Transmembrane emp24 domain-containing protein p24delta6 of Arabidopsis thaliana (Mouse-ear cress).